We begin with the raw amino-acid sequence, 675 residues long: UvrABC system protein B (675 aa).

Residues 32 to 417 (EGLSDGLAYQ…EHAGQVVEQV (386 aa)) form the Helicase ATP-binding domain. Position 45–52 (45–52 (GVTGSGKT)) interacts with ATP. The Beta-hairpin signature appears at 98-121 (YYDYYQPEAYVPSRDLFIEKDSAI). Residues 436-602 (QVDDLMSEIN…QIKKQVKDII (167 aa)) enclose the Helicase C-terminal domain. The 36-residue stretch at 634 to 669 (IKEIAKLEKAMQQAARDLQFEEAAVLRDRIRDIKEN) folds into the UVR domain.

It belongs to the UvrB family. Forms a heterotetramer with UvrA during the search for lesions. Interacts with UvrC in an incision complex.

Its subcellular location is the cytoplasm. Functionally, the UvrABC repair system catalyzes the recognition and processing of DNA lesions. A damage recognition complex composed of 2 UvrA and 2 UvrB subunits scans DNA for abnormalities. Upon binding of the UvrA(2)B(2) complex to a putative damaged site, the DNA wraps around one UvrB monomer. DNA wrap is dependent on ATP binding by UvrB and probably causes local melting of the DNA helix, facilitating insertion of UvrB beta-hairpin between the DNA strands. Then UvrB probes one DNA strand for the presence of a lesion. If a lesion is found the UvrA subunits dissociate and the UvrB-DNA preincision complex is formed. This complex is subsequently bound by UvrC and the second UvrB is released. If no lesion is found, the DNA wraps around the other UvrB subunit that will check the other stand for damage. This chain is UvrABC system protein B, found in Neisseria meningitidis serogroup B (strain ATCC BAA-335 / MC58).